The primary structure comprises 322 residues: Ras-like protein 2 (322 aa).

Residues G20–A25, V36–T42, A66–G67, and N123–D126 contribute to the GTP site. The short motif at Y39–Y47 is the Effector region element. K131 participates in a covalent cross-link: Glycyl lysine isopeptide (Lys-Gly) (interchain with G-Cter in ubiquitin). Position 153–155 (S153–K155) interacts with GTP. Positions Y178 to S322 are disordered. The segment covering K180–R205 has biased composition (polar residues). 6 positions are modified to phosphoserine: S198, S202, S207, S214, S235, and S238. Polar residues predominate over residues N215–T252. Over residues N261–N284 the composition is skewed to low complexity. Positions S285–K294 are enriched in polar residues. The S-palmitoyl cysteine moiety is linked to residue C318. C319 carries the cysteine methyl ester modification. C319 carries the S-farnesyl cysteine lipid modification. Residues I320–S322 constitute a propeptide, removed in mature form.

Belongs to the small GTPase superfamily. Ras family. Farnesylated by RAM1-RAM2, which is required for targeting RAS2 to the cytoplasmic site of the endoplasmic reticulum, where proteolytic processing of the C-terminus by RCE1 and methylation of the resulting carboxyl group by STE14 occurs. Post-translationally, palmitoylated by the ERF2-SHR5 complex, which is required for proper plasma membrane localization of RAS2.

It localises to the cell membrane. The enzyme catalyses GTP + H2O = GDP + phosphate + H(+). Alternates between an inactive form bound to GDP and an active form bound to GTP. Activated by guanine nucleotide-exchange factor (GEF) CDC25 and inactivated by GTPase-activating proteins (GAPs) IRA1 and IRA2. Functionally, the S.cerevisiae Ras proteins modulate the activity of the adenylate cyclase catalytic subunit and therefore affect the biosynthesis of cyclic-AMP. The polypeptide is Ras-like protein 2 (RAS2) (Saccharomyces cerevisiae (strain ATCC 204508 / S288c) (Baker's yeast)).